The following is a 489-amino-acid chain: UDP-N-acetylmuramoyl-L-alanyl-D-glutamate--2,6-diaminopimelate ligase (489 aa).

Residue S34 participates in UDP-N-acetyl-alpha-D-muramoyl-L-alanyl-D-glutamate binding. An ATP-binding site is contributed by 110-116; that stretch reads GTAGKTS. UDP-N-acetyl-alpha-D-muramoyl-L-alanyl-D-glutamate contacts are provided by residues 152 to 153, S179, Q185, and R187; that span reads TT. K219 is subject to N6-carboxylysine. Meso-2,6-diaminopimelate-binding positions include R383, 407–410, G455, and E459; that span reads DNPR. A Meso-diaminopimelate recognition motif motif is present at residues 407 to 410; sequence DNPR.

The protein belongs to the MurCDEF family. MurE subfamily. Mg(2+) serves as cofactor. Post-translationally, carboxylation is probably crucial for Mg(2+) binding and, consequently, for the gamma-phosphate positioning of ATP.

It localises to the cytoplasm. It catalyses the reaction UDP-N-acetyl-alpha-D-muramoyl-L-alanyl-D-glutamate + meso-2,6-diaminopimelate + ATP = UDP-N-acetyl-alpha-D-muramoyl-L-alanyl-gamma-D-glutamyl-meso-2,6-diaminopimelate + ADP + phosphate + H(+). Its pathway is cell wall biogenesis; peptidoglycan biosynthesis. Functionally, catalyzes the addition of meso-diaminopimelic acid to the nucleotide precursor UDP-N-acetylmuramoyl-L-alanyl-D-glutamate (UMAG) in the biosynthesis of bacterial cell-wall peptidoglycan. The polypeptide is UDP-N-acetylmuramoyl-L-alanyl-D-glutamate--2,6-diaminopimelate ligase (Agrobacterium fabrum (strain C58 / ATCC 33970) (Agrobacterium tumefaciens (strain C58))).